Consider the following 524-residue polypeptide: GMP synthase [glutamine-hydrolyzing] (524 aa).

Residues 9 to 207 (RILILDFGSQ…VIHICQCIPN (199 aa)) form the Glutamine amidotransferase type-1 domain. The active-site Nucleophile is C86. Catalysis depends on residues H181 and E183. The GMPS ATP-PPase domain occupies 208–399 (WTTKHIIEDS…LGLPADLIYR (192 aa)). ATP is bound at residue 235 to 241 (SGGVDSA).

As to quaternary structure, homodimer.

The enzyme catalyses XMP + L-glutamine + ATP + H2O = GMP + L-glutamate + AMP + diphosphate + 2 H(+). Its pathway is purine metabolism; GMP biosynthesis; GMP from XMP (L-Gln route): step 1/1. Its function is as follows. Catalyzes the synthesis of GMP from XMP. This chain is GMP synthase [glutamine-hydrolyzing], found in Coxiella burnetii (strain CbuK_Q154) (Coxiella burnetii (strain Q154)).